Consider the following 419-residue polypeptide: UDP-N-acetylglucosamine 1-carboxyvinyltransferase (419 aa).

Phosphoenolpyruvate is bound at residue 22 to 23 (KN). Arg91 is a UDP-N-acetyl-alpha-D-glucosamine binding site. Cys115 (proton donor) is an active-site residue. The residue at position 115 (Cys115) is a 2-(S-cysteinyl)pyruvic acid O-phosphothioketal. Residues 120–124 (RPVDL), 160–163 (KVSV), Asp305, and Val327 each bind UDP-N-acetyl-alpha-D-glucosamine.

This sequence belongs to the EPSP synthase family. MurA subfamily.

The protein resides in the cytoplasm. The catalysed reaction is phosphoenolpyruvate + UDP-N-acetyl-alpha-D-glucosamine = UDP-N-acetyl-3-O-(1-carboxyvinyl)-alpha-D-glucosamine + phosphate. The protein operates within cell wall biogenesis; peptidoglycan biosynthesis. Cell wall formation. Adds enolpyruvyl to UDP-N-acetylglucosamine. In Salmonella schwarzengrund (strain CVM19633), this protein is UDP-N-acetylglucosamine 1-carboxyvinyltransferase.